The sequence spans 194 residues: Peptidyl-tRNA hydrolase (194 aa).

Residue tyrosine 16 participates in tRNA binding. Histidine 21 (proton acceptor) is an active-site residue. TRNA is bound by residues phenylalanine 66, asparagine 68, and asparagine 114.

This sequence belongs to the PTH family. Monomer.

It is found in the cytoplasm. It carries out the reaction an N-acyl-L-alpha-aminoacyl-tRNA + H2O = an N-acyl-L-amino acid + a tRNA + H(+). Hydrolyzes ribosome-free peptidyl-tRNAs (with 1 or more amino acids incorporated), which drop off the ribosome during protein synthesis, or as a result of ribosome stalling. Its function is as follows. Catalyzes the release of premature peptidyl moieties from peptidyl-tRNA molecules trapped in stalled 50S ribosomal subunits, and thus maintains levels of free tRNAs and 50S ribosomes. The protein is Peptidyl-tRNA hydrolase of Geobacter metallireducens (strain ATCC 53774 / DSM 7210 / GS-15).